The following is a 277-amino-acid chain: MDTYAVIGNPITHSKSPFIHTQFAQQTGRSMCYTTLLAPLDGFERTVTTFRENGGIGLNITVPFKFEAYALATRLTDRARAAHAVNTFRFEQENEILGDNTDGVGLVRDITINLDFALPGKHVLLMGAGGAASGVILPLLQQKPGLLAIANRTPDKAIALQQQFVNHGNITGGHYQDFIGQQFDLIINATSASLHNALPPIPADLFHGTALVYDMLYSSKLTPFLEFASTQGVTNLVDGTGMLVEQAAESFLLWHGIRPETQNVIRQLRDELHLHAS.

Shikimate contacts are provided by residues 14–16 (SKS) and threonine 61. Lysine 65 acts as the Proton acceptor in catalysis. Residue aspartate 77 participates in NADP(+) binding. Asparagine 86 and aspartate 102 together coordinate shikimate. NADP(+) is bound by residues 127–131 (GAGGA), 151–156 (NRTPDK), and methionine 215. Tyrosine 217 provides a ligand contact to shikimate. Glycine 239 is a binding site for NADP(+).

It belongs to the shikimate dehydrogenase family. As to quaternary structure, homodimer.

The catalysed reaction is shikimate + NADP(+) = 3-dehydroshikimate + NADPH + H(+). Its pathway is metabolic intermediate biosynthesis; chorismate biosynthesis; chorismate from D-erythrose 4-phosphate and phosphoenolpyruvate: step 4/7. In terms of biological role, involved in the biosynthesis of the chorismate, which leads to the biosynthesis of aromatic amino acids. Catalyzes the reversible NADPH linked reduction of 3-dehydroshikimate (DHSA) to yield shikimate (SA). The polypeptide is Shikimate dehydrogenase (NADP(+)) (Nitrosomonas eutropha (strain DSM 101675 / C91 / Nm57)).